A 498-amino-acid polypeptide reads, in one-letter code: Ribulose bisphosphate carboxylase large chain (498 aa).

The propeptide occupies methionine 1–serine 2. Proline 3 bears the N-acetylproline mark. Lysine 14 bears the N6,N6,N6-trimethyllysine mark. Residues asparagine 123 and threonine 173 each coordinate substrate. Lysine 175 functions as the Proton acceptor in the catalytic mechanism. Lysine 177 contributes to the substrate binding site. Mg(2+)-binding residues include lysine 201, aspartate 203, and glutamate 204. N6-carboxylysine is present on lysine 201. Histidine 294 acts as the Proton acceptor in catalysis. Residues arginine 295, histidine 327, and serine 379 each coordinate substrate. The tract at residues proline 471 to glycine 498 is disordered.

This sequence belongs to the RuBisCO large chain family. Type I subfamily. As to quaternary structure, heterohexadecamer of 8 large chains and 8 small chains; disulfide-linked. The disulfide link is formed within the large subunit homodimers. It depends on Mg(2+) as a cofactor. In terms of processing, the disulfide bond which can form in the large chain dimeric partners within the hexadecamer appears to be associated with oxidative stress and protein turnover.

The protein localises to the plastid. The enzyme catalyses 2 (2R)-3-phosphoglycerate + 2 H(+) = D-ribulose 1,5-bisphosphate + CO2 + H2O. It catalyses the reaction D-ribulose 1,5-bisphosphate + O2 = 2-phosphoglycolate + (2R)-3-phosphoglycerate + 2 H(+). Functionally, ruBisCO catalyzes two reactions: the carboxylation of D-ribulose 1,5-bisphosphate, the primary event in carbon dioxide fixation, as well as the oxidative fragmentation of the pentose substrate in the photorespiration process. Both reactions occur simultaneously and in competition at the same active site. The sequence is that of Ribulose bisphosphate carboxylase large chain (rbcL) from Cuscuta reflexa (Southern Asian dodder).